Consider the following 186-residue polypeptide: GTP-dependent dephospho-CoA kinase (186 aa).

D43, I44, V45, D62, E120, and D143 together coordinate GTP.

Belongs to the GTP-dependent DPCK family.

The catalysed reaction is 3'-dephospho-CoA + GTP = GDP + CoA + H(+). It participates in cofactor biosynthesis; coenzyme A biosynthesis. Catalyzes the GTP-dependent phosphorylation of the 3'-hydroxyl group of dephosphocoenzyme A to form coenzyme A (CoA). In Haloquadratum walsbyi (strain DSM 16790 / HBSQ001), this protein is GTP-dependent dephospho-CoA kinase.